A 453-amino-acid polypeptide reads, in one-letter code: Jacalin-related lectin 40 (453 aa).

Jacalin-type lectin domains lie at 1–142, 154–296, and 306–449; these read MAQK…YFTT, HIKL…YFSS, and PEKL…YVVP. Position 2 is an N-acetylalanine (A2).

It belongs to the jacalin lectin family. As to expression, expressed in roots.

The sequence is that of Jacalin-related lectin 40 (JAL40) from Arabidopsis thaliana (Mouse-ear cress).